We begin with the raw amino-acid sequence, 95 residues long: Co-chaperonin GroES (95 aa).

Belongs to the GroES chaperonin family. Heptamer of 7 subunits arranged in a ring. Interacts with the chaperonin GroEL.

The protein localises to the cytoplasm. Its function is as follows. Together with the chaperonin GroEL, plays an essential role in assisting protein folding. The GroEL-GroES system forms a nano-cage that allows encapsulation of the non-native substrate proteins and provides a physical environment optimized to promote and accelerate protein folding. GroES binds to the apical surface of the GroEL ring, thereby capping the opening of the GroEL channel. The sequence is that of Co-chaperonin GroES from Streptococcus salivarius.